We begin with the raw amino-acid sequence, 179 residues long: Adenine phosphoribosyltransferase (179 aa).

It belongs to the purine/pyrimidine phosphoribosyltransferase family. As to quaternary structure, homodimer.

It localises to the cytoplasm. It carries out the reaction AMP + diphosphate = 5-phospho-alpha-D-ribose 1-diphosphate + adenine. It participates in purine metabolism; AMP biosynthesis via salvage pathway; AMP from adenine: step 1/1. Catalyzes a salvage reaction resulting in the formation of AMP, that is energically less costly than de novo synthesis. The protein is Adenine phosphoribosyltransferase of Helicobacter acinonychis (strain Sheeba).